The following is a 371-amino-acid chain: Chemerin-like receptor 1 (371 aa).

Over 1 to 39 (MEYDAYNDSGIYDDEYSDGFGYFVDLEEASPWEAKVAPV) the chain is Extracellular. Residue Asn7 is glycosylated (N-linked (GlcNAc...) asparagine). A helical transmembrane segment spans residues 40–62 (FLVVIYSLVCFLGLLGNGLVIVI). The Cytoplasmic segment spans residues 63-73 (ATFKMKKTVNT). Residues 74 to 95 (VWFVNLAVADFLFNIFLPMHIT) traverse the membrane as a helical segment. The Extracellular segment spans residues 96–112 (YAAMDYHWVFGKAMCKI). A disulfide bond links Cys110 and Cys187. A helical membrane pass occupies residues 113-133 (SNFLLSHNMYTSVFLLTVISF). At 134–152 (DRCISVLLPVWSQNHRSIR) the chain is on the cytoplasmic side. The helical transmembrane segment at 153–174 (LAYMTCSAVWVLAFFLSSPSLV) threads the bilayer. At 175–222 (FRDTANIHGKITCFNNFSLAAPESSPHPAHSQVVSTGYSRHVAVTVTR) the chain is on the extracellular side. Asn190 carries an N-linked (GlcNAc...) asparagine glycan. A helical transmembrane segment spans residues 223-243 (FLCGFLIPVFIITACYLTIVF). Over 244–259 (KLQRNRLAKNKKPFKI) the chain is Cytoplasmic. The helical transmembrane segment at 260-280 (IITIIITFFLCWCPYHTLYLL) threads the bilayer. Residues 281–298 (ELHHTAVPSSVFSLGLPL) are Extracellular-facing. The helical transmembrane segment at 299–318 (ATAVAIANSCMNPILYVFMG) threads the bilayer. Residues 319–371 (HDFRKFKVALFSRLANALSEDTGPSSYPSHRSFTKMSSLNEKASVNEKETSTL) lie on the Cytoplasmic side of the membrane. Position 337 is a phosphoserine (Ser337). Thr340 bears the Phosphothreonine mark. Phosphoserine is present on residues Ser347, Ser350, and Ser356. Thr370 carries the post-translational modification Phosphothreonine.

This sequence belongs to the chemokine-like receptor (CMKLR) family. As to expression, expressed in the differentiated adipocytes (at protein level). Ubiquitous. Highly expressed in adipose tissue and immature plasmacytoid dendritic cells (DCs) and at lower levels in myeloid DCs, macrophages, and NK cells. Expressed on macrophages isolated from different tissues, including peritoneal cavities, pleural cavities and spleen.

The protein resides in the cell membrane. Receptor for the chemoattractant adipokine chemerin/RARRES2 and for the omega-3 fatty acid derived molecule resolvin E1. Interaction with RARRES2 initiates activation of G proteins G(i)/G(o) and beta-arrestin pathways inducing cellular responses via second messenger pathways such as intracellular calcium mobilization, phosphorylation of MAP kinases MAPK1/MAPK3 (ERK1/2), TYRO3, MAPK14/P38MAPK and PI3K leading to multifunctional effects, like, reduction of immune responses, enhancing of adipogenesis and angionesis. Resolvin E1 down-regulates cytokine production in macrophages by reducing the activation of MAPK1/3 (ERK1/2) and NF-kappa-B. Positively regulates adipogenesis and adipocyte metabolism. This is Chemerin-like receptor 1 (Cmklr1) from Mus musculus (Mouse).